Reading from the N-terminus, the 80-residue chain is Lantibiotic Flvalpha.a (80 aa).

Positions 1 to 38 (MNKNPIYRSEEEAKDIACGNVAAELDENSQALDAINGA) are cleaved as a propeptide — cleaved by FlvT. 2,3-didehydrobutyrine; by FlvM1 is present on residues T43 and T47. Positions 52–55 (TVGC) form a cross-link, beta-methyllanthionine (Thr-Cys); by FlvM1. The lanthionine (Ser-Cys); by FlvM1 cross-link spans 58 to 68 (SYGLGNGGYCC). 2 cross-links (beta-methyllanthionine (Thr-Cys); by FlvM1) span residues 69–74 (TYTVEC) and 71–78 (TVECSKTC).

In terms of processing, the lanthionine formed by Ser-58 and Cys-68 forms a putative lipid II binding motif. Post-translationally, maturation of FlvA1 peptides involves the enzymatic conversion of Thr, and Ser into dehydrated AA and the formation of thioether bonds with cysteines. Modifications are processed by the flavecin synthetase FlvM1. This is followed by membrane translocation and cleavage of the modified precursor. Contains DL-lanthionine and DL-beta-methyllanthionine, when coepressed in E.coli with the flavecin synthetase FlvM1.

Its subcellular location is the secreted. In terms of biological role, lanthionine-containing peptide antibiotic (lantibiotic) only active on Gram-positive bacteria in synergy with Flvbeta peptides, which are encoded by the same operon than Flvalpha.a. Shows antibacterial activity in synergy with Flvbeta.b, Flvbeta.c, Flvbeta.e and Flvbeta.g. Does not show antibacterial activity when tested with Flvbeta.a, Flvbeta.d, Flvbeta.f and Flvbeta.h. The bactericidal activity of lantibiotics is based on depolarization of energized bacterial cytoplasmic membranes, initiated by the formation of aqueous transmembrane pores. This is Lantibiotic Flvalpha.a from Ruminococcus flavefaciens.